A 464-amino-acid polypeptide reads, in one-letter code: 3-isopropylmalate dehydratase large subunit (464 aa).

[4Fe-4S] cluster-binding residues include Cys337, Cys397, and Cys400.

The protein belongs to the aconitase/IPM isomerase family. LeuC type 1 subfamily. In terms of assembly, heterodimer of LeuC and LeuD. It depends on [4Fe-4S] cluster as a cofactor.

The catalysed reaction is (2R,3S)-3-isopropylmalate = (2S)-2-isopropylmalate. Its pathway is amino-acid biosynthesis; L-leucine biosynthesis; L-leucine from 3-methyl-2-oxobutanoate: step 2/4. Catalyzes the isomerization between 2-isopropylmalate and 3-isopropylmalate, via the formation of 2-isopropylmaleate. The chain is 3-isopropylmalate dehydratase large subunit from Bacillus cereus (strain B4264).